We begin with the raw amino-acid sequence, 619 residues long: Interferon-activable protein 204 (619 aa).

A Pyrin domain is found at 1 to 88 (MVNEYKRIVL…AEILKKERSE (88 aa)). The Nuclear export signal signature appears at 24–35 (LFKSLLARDLNL). Basic and acidic residues predominate over residues 86-99 (RSEVTGETSLEKNG). A disordered region spans residues 86–223 (RSEVTGETSL…QNQNIPRGAV (138 aa)). Residues 122-153 (TSATQEETSTAQAGTSTAQARTSTAQAGTSTA) are compositionally biased toward low complexity. A run of 3 repeats spans residues 134-140 (AGTSTAQ), 141-147 (ARTSTAQ), and 148-154 (AGTSTAQ). The segment at 134 to 154 (AGTSTAQARTSTAQAGTSTAQ) is 3 X 7 AA tandem repeats of A-[GR]-T-S-T-A-Q. Positions 150-157 (TSTAQKRK) match the Nuclear localization signal motif. A compositionally biased stretch (basic and acidic residues) spans 159–176 (MREEETGVKKSKAAKEPD). The span at 190 to 206 (SPILHSSSSASSNIPSA) shows a compositional bias: low complexity. Positions 207-218 (KNQKSQPQNQNI) are enriched in polar residues. 2 consecutive HIN-200 domains span residues 213 to 413 (PQNQ…IKIS) and 417 to 615 (NVPK…MQVI). The tract at residues 550–614 (KKTERNKFIY…RSVRHSYMQV (65 aa)) is interaction with ID2.

This sequence belongs to the HIN-200 family. In terms of assembly, interacts with UBTF. Interacts with RUNX2. Interacts with ID1, ID2 and ID3. Interacts with STING. Post-translationally, acetylated upon bacterial infection, leading to translocation from nucleus to cytoplasm and subsequent recruitment of STING to activate IFN-beta production. Present in osteoblasts (at protein level).

Its subcellular location is the nucleus. The protein resides in the nucleolus. It is found in the cytoplasm. Functionally, interferon-stimulated protein that plays a role in several biological processes including cell differentiation, autophagy and innate immunity. Cooperates with CGAS to sense dsDNA and activates the STING-dependent type I IFN pathway. Mechanistically, gets acetylated upon bacterial infection and then translocates from nucleus into cytoplasm to recruit STING for activation of TBK1-dependent IRF3 nuclear translocation and IFN-beta release. Inhibits the transcription of ribosomal RNA. May inhibit DNA binding by UBTF. Inhibits cell growth via p53/TP53 and RB1-dependent and independent pathways. Acts as a coactivator of RUNX2 during osteogenesis. May be involved in macrophage differentiation. Enables skeletal muscle and cardiac myocyte differentiation by sequestring Id proteins in the cytosol and promoting their ubiquitination and subsequent degradation. The polypeptide is Interferon-activable protein 204 (Ifi204) (Mus musculus (Mouse)).